The sequence spans 308 residues: 1,4-dihydroxy-2-naphthoate octaprenyltransferase (308 aa).

The Cytoplasmic segment spans residues 1 to 20 (MTEQQISRTQAWLESLRPKT). The chain crosses the membrane as a helical span at residues 21–41 (LPLAFAAIIVGTALAWWQGHF). Position 42 (Asp-42) is a topological domain, periplasmic. The chain crosses the membrane as a helical span at residues 43 to 63 (PLVALLALITAGLLQILSNLA). At 64-97 (NDYGDAVKGSDKPDRIGPLRGMQKGVITQQEMKR) the chain is on the cytoplasmic side. Residues 98–118 (ALIITVVLICLSGLALVAVAC) traverse the membrane as a helical segment. At 119-123 (HTLAD) the chain is on the periplasmic side. Residues 124–144 (FVGFLILGGLSIIAAITYTVG) form a helical membrane-spanning segment. Over 145–148 (NRPY) the chain is Cytoplasmic. The helical transmembrane segment at 149-169 (GYIGLGDISVLVFFGWLSVMG) threads the bilayer. Residues 170–176 (SWYLQAH) lie on the Periplasmic side of the membrane. The helical transmembrane segment at 177–197 (TLIPALILPATACGLLATAVL) threads the bilayer. The Cytoplasmic portion of the chain corresponds to 198–227 (NINNLRDINSDRENGKNTLVVRLGEVNARR). A helical transmembrane segment spans residues 228–247 (YHACLLMGSLVCLALFNLFS). At 248–250 (LHS) the chain is on the periplasmic side. The chain crosses the membrane as a helical span at residues 251–270 (LWGWLFLLAAPLLVKQARYV). The Cytoplasmic portion of the chain corresponds to 271–286 (MREMDPVAMRPMLERT). A helical membrane pass occupies residues 287-307 (VKGALLTNLLFVLGIFLSQWA). Residue Ala-308 is a topological domain, periplasmic.

The protein belongs to the MenA family. Type 1 subfamily.

It localises to the cell inner membrane. It catalyses the reaction an all-trans-polyprenyl diphosphate + 1,4-dihydroxy-2-naphthoate + H(+) = a 2-demethylmenaquinol + CO2 + diphosphate. It functions in the pathway quinol/quinone metabolism; menaquinone biosynthesis; menaquinol from 1,4-dihydroxy-2-naphthoate: step 1/2. Functionally, conversion of 1,4-dihydroxy-2-naphthoate (DHNA) to demethylmenaquinone (DMK). Attaches octaprenylpyrophosphate, a membrane-bound 40-carbon side chain to DHNA. The conversion of DHNA to DMK proceeds in three stages: the removal of the carboxyl group of DHNA as CO(2), the attachment of the isoprenoid side chain, and a quinol-to-quinone oxidation, which is thought to be spontaneous. This is 1,4-dihydroxy-2-naphthoate octaprenyltransferase from Escherichia coli (strain K12).